The chain runs to 235 residues: Ubiquinone/menaquinone biosynthesis C-methyltransferase UbiE (235 aa).

T60, D81, and S126 together coordinate S-adenosyl-L-methionine.

The protein belongs to the class I-like SAM-binding methyltransferase superfamily. MenG/UbiE family.

It carries out the reaction a 2-demethylmenaquinol + S-adenosyl-L-methionine = a menaquinol + S-adenosyl-L-homocysteine + H(+). The catalysed reaction is a 2-methoxy-6-(all-trans-polyprenyl)benzene-1,4-diol + S-adenosyl-L-methionine = a 5-methoxy-2-methyl-3-(all-trans-polyprenyl)benzene-1,4-diol + S-adenosyl-L-homocysteine + H(+). It participates in quinol/quinone metabolism; menaquinone biosynthesis; menaquinol from 1,4-dihydroxy-2-naphthoate: step 2/2. Its pathway is cofactor biosynthesis; ubiquinone biosynthesis. Functionally, methyltransferase required for the conversion of demethylmenaquinol (DMKH2) to menaquinol (MKH2) and the conversion of 2-polyprenyl-6-methoxy-1,4-benzoquinol (DDMQH2) to 2-polyprenyl-3-methyl-6-methoxy-1,4-benzoquinol (DMQH2). The chain is Ubiquinone/menaquinone biosynthesis C-methyltransferase UbiE from Geobacter sp. (strain M21).